Here is a 345-residue protein sequence, read N- to C-terminus: Uroporphyrinogen decarboxylase (345 aa).

Substrate-binding positions include 27 to 31 (RQAGR), Phe-46, Asp-76, Tyr-152, Ser-207, and His-320.

The protein belongs to the uroporphyrinogen decarboxylase family. Homodimer.

Its subcellular location is the cytoplasm. The enzyme catalyses uroporphyrinogen III + 4 H(+) = coproporphyrinogen III + 4 CO2. It participates in porphyrin-containing compound metabolism; protoporphyrin-IX biosynthesis; coproporphyrinogen-III from 5-aminolevulinate: step 4/4. In terms of biological role, catalyzes the decarboxylation of four acetate groups of uroporphyrinogen-III to yield coproporphyrinogen-III. The sequence is that of Uroporphyrinogen decarboxylase from Geobacillus sp. (strain WCH70).